A 398-amino-acid chain; its full sequence is Carboxyaminopropylagmatine dehydrogenase (398 aa).

The protein belongs to the saccharopine dehydrogenase family.

It catalyses the reaction N(1)-[(S)-3-amino-3-carboxypropyl]agmatine + NADP(+) + H2O = L-aspartate 4-semialdehyde + agmatine + NADPH + H(+). It functions in the pathway amine and polyamine biosynthesis; spermidine biosynthesis. Its function is as follows. Dehydrogenase involved in the biosynthesis of spermidine via the carboxyaminopropylagmatine (CAPA) pathway. Catalyzes the reductive condensation of agmatine and L-aspartate-beta-semialdehyde (ASA) into CAPA. Shows activity toward putrescine and 1,3-diaminopropane, but the catalytic efficiency is three to four orders of magnitude lower than that for agmatine. Cannot use cadaverine or spermidine. This chain is Carboxyaminopropylagmatine dehydrogenase, found in Synechocystis sp. (strain ATCC 27184 / PCC 6803 / Kazusa).